Consider the following 353-residue polypeptide: Bone morphogenetic protein 2 (353 aa).

Residues 1–239 (GSLKRPEDLL…GHPLHKREKR (239 aa)) constitute a propeptide that is removed on maturation. N91, N121, and N157 each carry an N-linked (GlcNAc...) asparagine glycan. The tract at residues 228-248 (GKGHPLHKREKRQAKHKQRKR) is disordered. The span at 231-248 (HPLHKREKRQAKHKQRKR) shows a compositional bias: basic residues. 3 cysteine pairs are disulfide-bonded: C253-C318, C282-C350, and C286-C352. A glycan (N-linked (GlcNAc...) asparagine) is linked at N295.

Belongs to the TGF-beta family. In terms of assembly, homodimer; disulfide-linked.

Its subcellular location is the secreted. Negatively regulates the structure and function of the limb apical ectodermal ridge. This is Bone morphogenetic protein 2 (BMP2) from Gallus gallus (Chicken).